A 216-amino-acid polypeptide reads, in one-letter code: V-type ATP synthase subunit D (216 aa).

Belongs to the V-ATPase D subunit family.

Produces ATP from ADP in the presence of a proton gradient across the membrane. This chain is V-type ATP synthase subunit D, found in Clostridium novyi (strain NT).